We begin with the raw amino-acid sequence, 178 residues long: Ribosome maturation factor RimM (178 aa).

One can recognise a PRC barrel domain in the interval 100 to 173; sequence ADEYFIHQLY…QIVVRLLPGL (74 aa).

Belongs to the RimM family. In terms of assembly, binds ribosomal protein uS19.

It localises to the cytoplasm. An accessory protein needed during the final step in the assembly of 30S ribosomal subunit, possibly for assembly of the head region. Essential for efficient processing of 16S rRNA. May be needed both before and after RbfA during the maturation of 16S rRNA. It has affinity for free ribosomal 30S subunits but not for 70S ribosomes. This is Ribosome maturation factor RimM from Roseiflexus castenholzii (strain DSM 13941 / HLO8).